The chain runs to 300 residues: N-acetylmuramic acid 6-phosphate etherase (300 aa).

One can recognise an SIS domain in the interval 57-220 (IAVAFQSGGR…TTGAMIRTGK (164 aa)). Glutamate 85 (proton donor) is an active-site residue. Glutamate 116 is a catalytic residue.

It belongs to the GCKR-like family. MurNAc-6-P etherase subfamily. Homodimer.

The catalysed reaction is N-acetyl-D-muramate 6-phosphate + H2O = N-acetyl-D-glucosamine 6-phosphate + (R)-lactate. It participates in amino-sugar metabolism; 1,6-anhydro-N-acetylmuramate degradation. The protein operates within amino-sugar metabolism; N-acetylmuramate degradation. It functions in the pathway cell wall biogenesis; peptidoglycan recycling. Functionally, specifically catalyzes the cleavage of the D-lactyl ether substituent of MurNAc 6-phosphate, producing GlcNAc 6-phosphate and D-lactate. Together with AnmK, is also required for the utilization of anhydro-N-acetylmuramic acid (anhMurNAc) either imported from the medium or derived from its own cell wall murein, and thus plays a role in cell wall recycling. This is N-acetylmuramic acid 6-phosphate etherase from Aliivibrio fischeri (strain MJ11) (Vibrio fischeri).